The primary structure comprises 242 residues: UPF0273 protein TM_0370 (242 aa).

One can recognise a KaiC domain in the interval 3–242 (KRVKTGIPGM…IYPSEGGEGR (240 aa)). 30–37 (GGPGTGKT) serves as a coordination point for ATP.

This sequence belongs to the UPF0273 family.

The polypeptide is UPF0273 protein TM_0370 (Thermotoga maritima (strain ATCC 43589 / DSM 3109 / JCM 10099 / NBRC 100826 / MSB8)).